A 699-amino-acid chain; its full sequence is Long-chain-fatty-acid--CoA ligase 1 (699 aa).

Residue methionine 1 is modified to N-acetylmethionine. Tyrosine 9 bears the 3'-nitrotyrosine mark. The helical; Signal-anchor for type III membrane protein transmembrane segment at 25-45 (LPTNTLMGFGAFAALTTFWYA) threads the bilayer. Residues 46-699 (TRPKALKPPC…IDELYSTIKI (654 aa)) lie on the Cytoplasmic side of the membrane. Residue tyrosine 85 is modified to Phosphotyrosine. Tyrosine 86 is modified (3'-nitrotyrosine). Residue serine 136 is glycosylated (O-linked (GlcNAc) serine). N6-acetyllysine is present on residues lysine 208, lysine 357, and lysine 387. Serine 621 carries the phosphoserine modification. Residue lysine 633 is modified to N6-acetyllysine.

The protein belongs to the ATP-dependent AMP-binding enzyme family. The cofactor is Mg(2+). As to expression, liver, heart, epididymal adipose and to a lesser extent brain, small intestine and lung.

It is found in the mitochondrion outer membrane. Its subcellular location is the peroxisome membrane. The protein resides in the microsome membrane. The protein localises to the endoplasmic reticulum membrane. The enzyme catalyses a long-chain fatty acid + ATP + CoA = a long-chain fatty acyl-CoA + AMP + diphosphate. The catalysed reaction is (5Z,8Z,11Z,14Z)-eicosatetraenoate + ATP + CoA = (5Z,8Z,11Z,14Z)-eicosatetraenoyl-CoA + AMP + diphosphate. It carries out the reaction 3,7,11,15-tetramethylhexadecanoate + ATP + CoA = phytanoyl-CoA + AMP + diphosphate. It catalyses the reaction hexadecanoate + ATP + CoA = hexadecanoyl-CoA + AMP + diphosphate. The enzyme catalyses (E)-hexadec-2-enoate + ATP + CoA = (2E)-hexadecenoyl-CoA + AMP + diphosphate. The catalysed reaction is 2,6,10,14-tetramethylpentadecanoate + ATP + CoA = pristanoyl-CoA + AMP + diphosphate. It carries out the reaction 14,15-epoxy-(5Z,8Z,11Z)-eicosatrienoate + ATP + CoA = 14,15-epoxy-(5Z,8Z,11Z)-eicosatrienoyl-CoA + AMP + diphosphate. It catalyses the reaction 5-hydroxy-(6E,8Z,11Z,14Z)-eicosatetraenoate + ATP + CoA = 5-hydroxy-(6E,8Z,11Z,14Z)-eicosatetraenoyl-CoA + AMP + diphosphate. The enzyme catalyses 12-hydroxy-(5Z,8Z,10E,14Z)-eicosatetraenoate + ATP + CoA = 12-hydroxy-(5Z,8Z,10E,14Z)-eicosatetraenoyl-CoA + AMP + diphosphate. The catalysed reaction is 15-hydroxy-(5Z,8Z,11Z,13E)-eicosatetraenoate + ATP + CoA = 15-hydroxy-(5Z,8Z,11Z,13E)-eicosatetraenoyl-CoA + AMP + diphosphate. It carries out the reaction (9Z)-octadecenoate + ATP + CoA = (9Z)-octadecenoyl-CoA + AMP + diphosphate. With respect to regulation, inhibited at high temperature and by arachidonate. Catalyzes the conversion of long-chain fatty acids to their active form acyl-CoAs for both synthesis of cellular lipids, and degradation via beta-oxidation. Preferentially uses palmitoleate, oleate and linoleate. Preferentially activates arachidonate than epoxyeicosatrienoic acids (EETs) or hydroxyeicosatrienoic acids (HETEs). This Rattus norvegicus (Rat) protein is Long-chain-fatty-acid--CoA ligase 1.